A 437-amino-acid polypeptide reads, in one-letter code: Glucose-1-phosphate adenylyltransferase (437 aa).

Residues Tyr113, Gly179, 194 to 195 (EK), and Ser212 contribute to the alpha-D-glucose 1-phosphate site.

It belongs to the bacterial/plant glucose-1-phosphate adenylyltransferase family. Homotetramer.

The enzyme catalyses alpha-D-glucose 1-phosphate + ATP + H(+) = ADP-alpha-D-glucose + diphosphate. It functions in the pathway glycan biosynthesis; glycogen biosynthesis. Its function is as follows. Involved in the biosynthesis of ADP-glucose, a building block required for the elongation reactions to produce glycogen. Catalyzes the reaction between ATP and alpha-D-glucose 1-phosphate (G1P) to produce pyrophosphate and ADP-Glc. The polypeptide is Glucose-1-phosphate adenylyltransferase (Haemophilus influenzae (strain ATCC 51907 / DSM 11121 / KW20 / Rd)).